Consider the following 219-residue polypeptide: Thymidylate kinase (219 aa).

Residue 7–14 (GIDGCGKT) participates in ATP binding.

It belongs to the thymidylate kinase family.

The enzyme catalyses dTMP + ATP = dTDP + ADP. In terms of biological role, phosphorylation of dTMP to form dTDP in both de novo and salvage pathways of dTTP synthesis. This is Thymidylate kinase from Anaplasma phagocytophilum (strain HZ).